Consider the following 560-residue polypeptide: DNA ligase B (560 aa).

The active-site N6-AMP-lysine intermediate is the lysine 124.

It belongs to the NAD-dependent DNA ligase family. LigB subfamily.

The catalysed reaction is NAD(+) + (deoxyribonucleotide)n-3'-hydroxyl + 5'-phospho-(deoxyribonucleotide)m = (deoxyribonucleotide)n+m + AMP + beta-nicotinamide D-nucleotide.. Its function is as follows. Catalyzes the formation of phosphodiester linkages between 5'-phosphoryl and 3'-hydroxyl groups in double-stranded DNA using NAD as a coenzyme and as the energy source for the reaction. The sequence is that of DNA ligase B from Escherichia coli (strain K12 / DH10B).